The sequence spans 318 residues: Acetyl-coenzyme A carboxylase carboxyl transferase subunit alpha (318 aa).

Residues 43–293 (RSQTALRDLY…GDGIAAALKS (251 aa)) form the CoA carboxyltransferase C-terminal domain.

This sequence belongs to the AccA family. Acetyl-CoA carboxylase is a heterohexamer composed of biotin carboxyl carrier protein (AccB), biotin carboxylase (AccC) and two subunits each of ACCase subunit alpha (AccA) and ACCase subunit beta (AccD).

It localises to the cytoplasm. The catalysed reaction is N(6)-carboxybiotinyl-L-lysyl-[protein] + acetyl-CoA = N(6)-biotinyl-L-lysyl-[protein] + malonyl-CoA. It functions in the pathway lipid metabolism; malonyl-CoA biosynthesis; malonyl-CoA from acetyl-CoA: step 1/1. Component of the acetyl coenzyme A carboxylase (ACC) complex. First, biotin carboxylase catalyzes the carboxylation of biotin on its carrier protein (BCCP) and then the CO(2) group is transferred by the carboxyltransferase to acetyl-CoA to form malonyl-CoA. The polypeptide is Acetyl-coenzyme A carboxylase carboxyl transferase subunit alpha (Bartonella bacilliformis (strain ATCC 35685 / KC583 / Herrer 020/F12,63)).